The following is a 226-amino-acid chain: Small ribosomal subunit protein uS2c (226 aa).

The protein belongs to the universal ribosomal protein uS2 family.

It is found in the plastid. It localises to the chloroplast. In Ostreococcus tauri, this protein is Small ribosomal subunit protein uS2c (rps2).